Consider the following 169-residue polypeptide: MWRVPVLLLVLGGAGLRVPAAGASTVRPDDIIPGVEDSVVTPGTEDSVVTPGAEDNVVTDGATEEPYESGLTPLVTKNTESVTDLHLEDGPTQESTVHAKEESQSTTTLNVVTSHSREKVGEDTETTVEKDGLATVTLVGIIVGVLLAIGFIGGIIIVVARKMSGRYSP.

An N-terminal signal peptide occupies residues 1–22 (MWRVPVLLLVLGGAGLRVPAAG). The Extracellular segment spans residues 23–138 (ASTVRPDDII…EKDGLATVTL (116 aa)). O-linked (GalNAc...) threonine glycosylation occurs at Thr25. The interval 37 to 69 (DSVVTPGTEDSVVTPGAEDNVVTDGATEEPYES) is disordered. O-linked (GalNAc...) serine glycosylation occurs at Ser38. Residues Thr41 and Thr44 are each glycosylated (O-linked (GalNAc...) threonine). The O-linked (GalNAc...) serine glycan is linked to Ser47. 15 O-linked (GalNAc...) threonine glycosylation sites follow: Thr50, Thr59, Thr63, Thr72, Thr76, Thr79, Thr83, Thr92, Thr96, Thr106, Thr107, Thr108, Thr113, Thr126, and Thr127. The chain crosses the membrane as a helical span at residues 139-159 (VGIIVGVLLAIGFIGGIIIVV). Positions 140 to 144 (GIIVG) are requires for dimerization and lipid rafts association. The Cytoplasmic segment spans residues 160-169 (ARKMSGRYSP). Positions 161-162 (RK) are requires for interaction with MSN and EZR.

The protein belongs to the podoplanin family. As to quaternary structure, homodimer. Interacts with CLEC1B; the interaction is independent of CLEC1B glycosylation and activates CLEC1B; the interaction is dependent of sialic acid on O-glycans. Interacts with CD9; this interaction is homophilic and attenuates platelet aggregation and pulmonary metastasis induced by PDPN. Interacts with LGALS8; the interaction is glycosylation-dependent; may participate in connection of the lymphatic endothelium to the surrounding extracellular matrix. Interacts with HSPA9. Interacts (via extracellular domain) with CD44; this interaction is required for PDPN-mediated directional migration and regulation of lamellipodia extension/stabilization during cell spreading and migration. Interacts (via cytoplasmic domain) with MSN and EZR; activates RHOA and promotes epithelial-mesenchymal transition. Interacts with CCL21; relocalized PDPN to the basolateral membrane. Post-translationally, extensively O-glycosylated. Contains sialic acid residues. O-glycosylation is necessary for platelet aggregation activity. Disialylated at Thr-59; sialic acid is critical for platelet-aggregating activity and for CLEC1B interaction. The N-terminus is blocked.

The protein localises to the membrane. The protein resides in the cell projection. It localises to the filopodium membrane. Its subcellular location is the lamellipodium membrane. It is found in the microvillus membrane. The protein localises to the ruffle membrane. The protein resides in the membrane raft. It localises to the apical cell membrane. Its subcellular location is the basolateral cell membrane. It is found in the invadopodium. In terms of biological role, mediates effects on cell migration and adhesion through its different partners. During development plays a role in blood and lymphatic vessels separation by binding CLEC1B, triggering CLEC1B activation in platelets and leading to platelet activation and/or aggregation. Interaction with CD9, on the contrary, attenuates platelet aggregation and pulmonary metastasis induced by PDPN. Mediates effects on cell migration and adhesion through its different partners. Through MSN or EZR interaction promotes epithelial-mesenchymal transition (EMT) leading to ERZ phosphorylation and triggering RHOA activation leading to cell migration increase and invasiveness. Interaction with CD44 promotes directional cell migration in epithelial and tumor cells. In lymph nodes (LNs), controls fibroblastic reticular cells (FRCs) adhesion to the extracellular matrix (ECM) and contraction of the actomyosin by maintaining ERM proteins (EZR; MSN and RDX) and MYL9 activation through association with unknown transmembrane proteins. Engagement of CLEC1B by PDPN promotes FRCs relaxation by blocking lateral membrane interactions leading to reduction of ERM proteins (EZR; MSN and RDX) and MYL9 activation. Through binding with LGALS8 may participate in connection of the lymphatic endothelium to the surrounding extracellular matrix. In keratinocytes, induces changes in cell morphology showing an elongated shape, numerous membrane protrusions, major reorganization of the actin cytoskeleton, increased motility and decreased cell adhesion. Controls invadopodia stability and maturation leading to efficient degradation of the extracellular matrix (ECM) in tumor cells through modulation of RHOC activity in order to activate ROCK1/ROCK2 and LIMK1/LIMK2 and inactivation of CFL1. Required for normal lung cell proliferation and alveolus formation at birth. Does not function as a water channel or as a regulator of aquaporin-type water channels. Does not have any effect on folic acid or amino acid transport. The chain is Podoplanin (PDPN) from Canis lupus familiaris (Dog).